Reading from the N-terminus, the 225-residue chain is Histone H3-like centromeric protein cid (225 aa).

Over residues 1–11 the composition is skewed to basic residues; that stretch reads MPRHSRAKRAP. The interval 1-131 is disordered; it reads MPRHSRAKRA…KAANPMSRAK (131 aa). Residues 43–52 show a composition bias toward polar residues; it reads FTTSQLTLQD. Phosphoserine occurs at positions 74 and 75. At Thr76 the chain carries Phosphothreonine. Ser77 is subject to Phosphoserine. Positions 86–103 are enriched in polar residues; sequence RYPTTRSPQTRRMTVQQE. Positions 133–225 are H3-like; the sequence is MDREIRRLQH…AYICDRGRQF (93 aa).

This sequence belongs to the histone H3 family. As to quaternary structure, forms a nucleosome-like histone octamer containing two molecules each of H2A, H2B, cid and H4 assembled in one cid-H4 heterotetramer and two H2A-H2B heterodimers. The cid-H4 heterotetramer is more compact and structurally more rigid than corresponding H3-H4 heterotetramers. Interacts with the condensin subunit Cap-G. Interacts with Chrac-14.

It localises to the nucleus. It is found in the chromosome. Its subcellular location is the centromere. The protein resides in the kinetochore. Histone H3-like variant which exclusively replaces conventional H3 in the nucleosome core of centromeric chromatin at the inner plate of the kinetochore. Required for recruitment and assembly of kinetochore proteins, mitotic progression and chromosome segregation. May serve as an epigenetic mark that propagates centromere identity through replication and cell division. This Drosophila melanogaster (Fruit fly) protein is Histone H3-like centromeric protein cid.